The primary structure comprises 621 residues: Type 2 DNA topoisomerase 6 subunit B (621 aa).

ATP is bound by residues N48, D80, 101 to 102 (SR), 111 to 118 (GQQGIGIS), and K435.

Belongs to the TOP6B family. As to quaternary structure, homodimer. Heterotetramer of two Top6A and two Top6B chains.

It carries out the reaction ATP-dependent breakage, passage and rejoining of double-stranded DNA.. Its function is as follows. Relaxes both positive and negative superturns and exhibits a strong decatenase activity. This is Type 2 DNA topoisomerase 6 subunit B from Methanosarcina acetivorans (strain ATCC 35395 / DSM 2834 / JCM 12185 / C2A).